The sequence spans 400 residues: Aspartate aminotransferase (400 aa).

Gly-42 and Asn-180 together coordinate L-aspartate. Lys-241 bears the N6-(pyridoxal phosphate)lysine mark. An L-aspartate-binding site is contributed by Arg-373.

This sequence belongs to the class-I pyridoxal-phosphate-dependent aminotransferase family. As to quaternary structure, homodimer. The cofactor is pyridoxal 5'-phosphate.

It is found in the cytoplasm. The catalysed reaction is L-aspartate + 2-oxoglutarate = oxaloacetate + L-glutamate. The chain is Aspartate aminotransferase (aspC) from Sulfolobus acidocaldarius (strain ATCC 33909 / DSM 639 / JCM 8929 / NBRC 15157 / NCIMB 11770).